Consider the following 256-residue polypeptide: MRILLTNDDGIHADGLAVLERIARTLSDDVWIVAPETDQSGLAHSLTLSEPLRLRQLGENRYALRGTPTDCVIMAIRKLLPGKPDLVLSGVNAGANLADDVTYSGTVAGAIEGTVHGVRSFALSQAYSYVAGHSIPWDVVETHAPALIAKLMRIDLPPGTFLNLNFPNCEPGEVAGVDVTSQGKLDFGLSVEERTDGRGLPYFWLRFGDRKGNFRPGTDIGTLRDNRISVTPLKLDLTDYAVQDIIAAALNSEVGS.

A divalent metal cation is bound by residues D8, D9, S40, and N92.

This sequence belongs to the SurE nucleotidase family. A divalent metal cation is required as a cofactor.

The protein localises to the cytoplasm. The enzyme catalyses a ribonucleoside 5'-phosphate + H2O = a ribonucleoside + phosphate. Nucleotidase that shows phosphatase activity on nucleoside 5'-monophosphates. The chain is 5'-nucleotidase SurE from Allorhizobium ampelinum (strain ATCC BAA-846 / DSM 112012 / S4) (Agrobacterium vitis (strain S4)).